The following is a 449-amino-acid chain: Plasmepsin IV (449 aa).

The Cytoplasmic segment spans residues 1 to 37 (MALTVKEEEFSNTLIKNASAFDRLKLGNLKNLKIQKK). The propeptide occupies 1-121 (MALTVKEEEF…SGYAQKGYLG (121 aa)). The chain crosses the membrane as a helical; Signal-anchor for type II membrane protein span at residues 38-58 (LQFLYLILFVLITGVFFFFLI). The Lumenal portion of the chain corresponds to 59-449 (GNFYSHRKLY…SVGFAVAKNL (391 aa)). One can recognise a Peptidase A1 domain in the interval 137–444 (FYGEGQIGTN…DYEKESVGFA (308 aa)). Aspartate 155 is a catalytic residue. A disulfide bond links cysteine 168 and cysteine 173. Aspartate 335 is an active-site residue. The cysteines at positions 370 and 406 are disulfide-linked.

Belongs to the peptidase A1 family. As to quaternary structure, component of the hemozoin formation complex (HFC) composed of falcipains FP2A and/or FP2B, plasmepsins PMII, PMIII/HAP and PMIV, heme detoxifying protein HDP and falcilysin FLN. The HFC complex is involved in hemoglobin degradation and detoxification of heme in the food vacuole during the asexual blood stage. Proteolytically cleaved into the soluble active mature form by cysteine proteases in the digestive vacuole of trophozoites. Proteolysis requires an acidic environment. Autoprocessing or transprocessing by other plasmepsins such as PMII may serve as an alternate activation system.

Its subcellular location is the membrane. It is found in the vacuole lumen. The enzyme catalyses Hydrolysis of the bonds linking certain hydrophobic residues in hemoglobin or globin. Also cleaves small molecules substrates such as Ala-Leu-Glu-Arg-Thr-Phe-|-Phe(NO2)-Ser-Phe-Pro-Thr.. Its activity is regulated as follows. Inhibited by KNI derived compounds KNI-10333 and to a lesser extent KNI-10743. Functionally, during the asexual blood stage, catalyzes the cleavage of denatured host hemoglobin (Hb). Digestion of host Hb is an essential step which provides the parasite with amino acids for protein synthesis, and regulates osmolarity. The protein is Plasmepsin IV of Plasmodium falciparum (isolate 3D7).